The sequence spans 190 residues: Potassium-transporting ATPase KdpC subunit (190 aa).

The helical transmembrane segment at 11–31 (LIVLMSLITGVAYPLVVTGVA) threads the bilayer.

This sequence belongs to the KdpC family. In terms of assembly, the system is composed of three essential subunits: KdpA, KdpB and KdpC.

It localises to the cell inner membrane. Functionally, part of the high-affinity ATP-driven potassium transport (or Kdp) system, which catalyzes the hydrolysis of ATP coupled with the electrogenic transport of potassium into the cytoplasm. This subunit acts as a catalytic chaperone that increases the ATP-binding affinity of the ATP-hydrolyzing subunit KdpB by the formation of a transient KdpB/KdpC/ATP ternary complex. In Pseudomonas savastanoi pv. phaseolicola (strain 1448A / Race 6) (Pseudomonas syringae pv. phaseolicola (strain 1448A / Race 6)), this protein is Potassium-transporting ATPase KdpC subunit.